A 298-amino-acid chain; its full sequence is N-acetylmuramic acid 6-phosphate etherase (298 aa).

In terms of domain architecture, SIS spans 55 to 218 (IHAQVSGGGR…STGLMIKSGK (164 aa)). Glu83 (proton donor) is an active-site residue. The active site involves Glu114.

Belongs to the GCKR-like family. MurNAc-6-P etherase subfamily. As to quaternary structure, homodimer.

The catalysed reaction is N-acetyl-D-muramate 6-phosphate + H2O = N-acetyl-D-glucosamine 6-phosphate + (R)-lactate. The protein operates within amino-sugar metabolism; 1,6-anhydro-N-acetylmuramate degradation. Its pathway is amino-sugar metabolism; N-acetylmuramate degradation. It participates in cell wall biogenesis; peptidoglycan recycling. In terms of biological role, specifically catalyzes the cleavage of the D-lactyl ether substituent of MurNAc 6-phosphate, producing GlcNAc 6-phosphate and D-lactate. Together with AnmK, is also required for the utilization of anhydro-N-acetylmuramic acid (anhMurNAc) either imported from the medium or derived from its own cell wall murein, and thus plays a role in cell wall recycling. The protein is N-acetylmuramic acid 6-phosphate etherase of Escherichia fergusonii (strain ATCC 35469 / DSM 13698 / CCUG 18766 / IAM 14443 / JCM 21226 / LMG 7866 / NBRC 102419 / NCTC 12128 / CDC 0568-73).